Here is a 190-residue protein sequence, read N- to C-terminus: Shikimate kinase (190 aa).

Glycine 13–threonine 18 is an ATP binding site. A Mg(2+)-binding site is contributed by threonine 17. Aspartate 35, arginine 59, and glycine 81 together coordinate substrate. Arginine 119 provides a ligand contact to ATP. Arginine 138 provides a ligand contact to substrate.

It belongs to the shikimate kinase family. In terms of assembly, monomer. Mg(2+) is required as a cofactor.

The protein localises to the cytoplasm. The catalysed reaction is shikimate + ATP = 3-phosphoshikimate + ADP + H(+). It participates in metabolic intermediate biosynthesis; chorismate biosynthesis; chorismate from D-erythrose 4-phosphate and phosphoenolpyruvate: step 5/7. Functionally, catalyzes the specific phosphorylation of the 3-hydroxyl group of shikimic acid using ATP as a cosubstrate. The protein is Shikimate kinase of Ralstonia nicotianae (strain ATCC BAA-1114 / GMI1000) (Ralstonia solanacearum).